We begin with the raw amino-acid sequence, 578 residues long: Arginine--tRNA ligase (578 aa).

The short motif at 127 to 137 (PNLAKEMHVGH) is the 'HIGH' region element.

It belongs to the class-I aminoacyl-tRNA synthetase family. In terms of assembly, monomer.

The protein localises to the cytoplasm. It carries out the reaction tRNA(Arg) + L-arginine + ATP = L-arginyl-tRNA(Arg) + AMP + diphosphate. The polypeptide is Arginine--tRNA ligase (Pseudomonas savastanoi pv. phaseolicola (strain 1448A / Race 6) (Pseudomonas syringae pv. phaseolicola (strain 1448A / Race 6))).